A 249-amino-acid polypeptide reads, in one-letter code: Glucosamine-6-phosphate deaminase 2 (249 aa).

Catalysis depends on Asp-67, which acts as the Proton acceptor; for enolization step. Catalysis depends on Asn-136, which acts as the For ring-opening step. The active-site Proton acceptor; for ring-opening step is His-138. Glu-143 (for ring-opening step) is an active-site residue.

This sequence belongs to the glucosamine/galactosamine-6-phosphate isomerase family. NagB subfamily.

It catalyses the reaction alpha-D-glucosamine 6-phosphate + H2O = beta-D-fructose 6-phosphate + NH4(+). The protein operates within amino-sugar metabolism; N-acetylneuraminate degradation; D-fructose 6-phosphate from N-acetylneuraminate: step 5/5. Catalyzes the reversible isomerization-deamination of glucosamine 6-phosphate (GlcN6P) to form fructose 6-phosphate (Fru6P) and ammonium ion. Required for growth on glucosamine and also provides the majority of GlcN6P deaminase activity during growth on N-acetylglucosamine (GlcNAc). In Bacillus subtilis (strain 168), this protein is Glucosamine-6-phosphate deaminase 2.